Consider the following 279-residue polypeptide: uncharacterized protein (279 aa).

The segment at R60 to N92 is disordered. A compositionally biased stretch (polar residues) spans D70–I85. The next 3 membrane-spanning stretches (helical) occupy residues I156–N176, I202–L222, and F237–I257.

The protein resides in the cell membrane. This is an uncharacterized protein from Mycoplasma genitalium (strain ATCC 33530 / DSM 19775 / NCTC 10195 / G37) (Mycoplasmoides genitalium).